Here is a 603-residue protein sequence, read N- to C-terminus: UvrABC system protein C (603 aa).

In terms of domain architecture, GIY-YIG spans 13–92; that stretch reads SSPGVYLMKD…IKQHHPKYNV (80 aa). One can recognise a UVR domain in the interval 205–240; that stretch reads EEVVKDLEKVIQKASDNLEFEQAANYYRTLSLIKQA.

Belongs to the UvrC family. As to quaternary structure, interacts with UvrB in an incision complex.

The protein localises to the cytoplasm. Functionally, the UvrABC repair system catalyzes the recognition and processing of DNA lesions. UvrC both incises the 5' and 3' sides of the lesion. The N-terminal half is responsible for the 3' incision and the C-terminal half is responsible for the 5' incision. The polypeptide is UvrABC system protein C (Chlamydia pneumoniae (Chlamydophila pneumoniae)).